A 344-amino-acid chain; its full sequence is Protein YRO2 (344 aa).

Residues 1–34 (MSDYVELLKRGGNEAIKINPPTGADFHITSRGSD) lie on the Extracellular side of the membrane. Residues 35–55 (WLFTVFCVNLLFGVILVPLMF) form a helical membrane-spanning segment. The Cytoplasmic segment spans residues 56 to 62 (RKPVKDR). A helical transmembrane segment spans residues 63–83 (FVYYTAIAPNLFMSIAYFTMA). At 84–119 (SNLGWIPVRAKYNHVQTSTQKEHPGYRQIFYARYVG) the chain is on the extracellular side. A helical membrane pass occupies residues 120-140 (WFLAFPWPIIQMSLLGGTPLW). Residue Q141 is a topological domain, cytoplasmic. Residues 142–162 (IAFNVGMTEIFTVCWLIAACV) traverse the membrane as a helical segment. Over 163–172 (HSTYKWGYYT) the chain is Extracellular. The chain crosses the membrane as a helical span at residues 173-193 (IGIGAAIVVCISLMTTTFNLV). Over 194–202 (KARGKDVSN) the chain is Cytoplasmic. A helical transmembrane segment spans residues 203–223 (VFITFMSVIMFLWLIAYPTCF). Topologically, residues 224-238 (GITDGGNVLQPDSAT) are extracellular. A helical membrane pass occupies residues 239 to 259 (IFYGIIDLLILSILPVLFMPL). The Cytoplasmic portion of the chain corresponds to 260 to 344 (ANYLGIERLG…EEEDVATDSE (85 aa)). Residues 282–344 (PVAEKKMPSP…EEEDVATDSE (63 aa)) form a disordered region. Residue K286 forms a Glycyl lysine isopeptide (Lys-Gly) (interchain with G-Cter in ubiquitin) linkage. S293 carries the phosphoserine modification. The span at 297-306 (SDSDSSIKEK) shows a compositional bias: basic and acidic residues. The segment covering 307-330 (LKLKKKHKKDKKKAKKAKKAKKAK) has biased composition (basic residues). Over residues 334-344 (EEEEDVATDSE) the composition is skewed to acidic residues. T341 carries the phosphothreonine modification. The residue at position 343 (S343) is a Phosphoserine.

Belongs to the archaeal/bacterial/fungal opsin family.

It is found in the membrane. The sequence is that of Protein YRO2 (YRO2) from Saccharomyces cerevisiae (strain ATCC 204508 / S288c) (Baker's yeast).